Here is a 151-residue protein sequence, read N- to C-terminus: uncharacterized protein (151 aa).

This is an uncharacterized protein from Homo sapiens (Human).